The following is a 196-amino-acid chain: Endonuclease V (196 aa).

Residues D37 and D98 each coordinate Mg(2+).

This sequence belongs to the endonuclease V family. Mg(2+) is required as a cofactor.

Its subcellular location is the cytoplasm. It carries out the reaction Endonucleolytic cleavage at apurinic or apyrimidinic sites to products with a 5'-phosphate.. In terms of biological role, DNA repair enzyme involved in the repair of deaminated bases. Selectively cleaves double-stranded DNA at the second phosphodiester bond 3' to a deoxyinosine leaving behind the intact lesion on the nicked DNA. The polypeptide is Endonuclease V (Sulfurisphaera tokodaii (strain DSM 16993 / JCM 10545 / NBRC 100140 / 7) (Sulfolobus tokodaii)).